Consider the following 431-residue polypeptide: Ribonuclease TTHA0252 (431 aa).

H59, H61, D63, H64, H141, D162, and H400 together coordinate Zn(2+).

Belongs to the metallo-beta-lactamase superfamily. RNA-metabolizing metallo-beta-lactamase-like family. In terms of assembly, monomer. Requires Zn(2+) as cofactor.

It localises to the cytoplasm. Its activity is regulated as follows. Inhibited by cadmium, cobalt, manganese, magnesium, calcium and nickel ions. Has endoribonuclease activity towards 23S and 16S rRNA (in vitro). The sequence is that of Ribonuclease TTHA0252 from Thermus thermophilus (strain ATCC 27634 / DSM 579 / HB8).